Reading from the N-terminus, the 282-residue chain is MLLAIPSKGRLLDPTLKLLEAIGMRLLASDERALVVPTSWRDVNVIRARPEDIPYIVESGKVWAGVTGHDYVVESGASVVEALELGFGRGRLVVAVPKSSGIKTVDELPPGTRVATKFVNIAYNYFAELGKRVRVVRVTGSVEILPQLGIADAILDVMATGTTLEVHGLVPIATVLETSARLIVHPSYVNHELTKKLTTFIQGYYAAQGKKMIFLNVPASRLEKVLAVLPAMEAPSVTPLAKGDVYEVFSVVPEDELPDIVIRLKEAGAKDIVVTPIEKLIS.

This sequence belongs to the ATP phosphoribosyltransferase family. Long subfamily. Mg(2+) serves as cofactor.

It localises to the cytoplasm. The catalysed reaction is 1-(5-phospho-beta-D-ribosyl)-ATP + diphosphate = 5-phospho-alpha-D-ribose 1-diphosphate + ATP. It participates in amino-acid biosynthesis; L-histidine biosynthesis; L-histidine from 5-phospho-alpha-D-ribose 1-diphosphate: step 1/9. With respect to regulation, feedback inhibited by histidine. In terms of biological role, catalyzes the condensation of ATP and 5-phosphoribose 1-diphosphate to form N'-(5'-phosphoribosyl)-ATP (PR-ATP). Has a crucial role in the pathway because the rate of histidine biosynthesis seems to be controlled primarily by regulation of HisG enzymatic activity. In Pyrobaculum calidifontis (strain DSM 21063 / JCM 11548 / VA1), this protein is ATP phosphoribosyltransferase.